Consider the following 268-residue polypeptide: Ribosomal RNA small subunit methyltransferase A (268 aa).

S-adenosyl-L-methionine-binding residues include Asn-18, Leu-20, Gly-45, Glu-66, Asp-91, and Asn-112.

Belongs to the class I-like SAM-binding methyltransferase superfamily. rRNA adenine N(6)-methyltransferase family. RsmA subfamily.

Its subcellular location is the cytoplasm. The enzyme catalyses adenosine(1518)/adenosine(1519) in 16S rRNA + 4 S-adenosyl-L-methionine = N(6)-dimethyladenosine(1518)/N(6)-dimethyladenosine(1519) in 16S rRNA + 4 S-adenosyl-L-homocysteine + 4 H(+). Functionally, specifically dimethylates two adjacent adenosines (A1518 and A1519) in the loop of a conserved hairpin near the 3'-end of 16S rRNA in the 30S particle. May play a critical role in biogenesis of 30S subunits. This Shewanella frigidimarina (strain NCIMB 400) protein is Ribosomal RNA small subunit methyltransferase A.